A 209-amino-acid polypeptide reads, in one-letter code: Uracil phosphoribosyltransferase (209 aa).

5-phospho-alpha-D-ribose 1-diphosphate is bound by residues R79, R104, and 131–139; that span reads DPMLATGGS. Uracil is bound by residues I194 and 199 to 201; that span reads GDA. D200 lines the 5-phospho-alpha-D-ribose 1-diphosphate pocket.

This sequence belongs to the UPRTase family. The cofactor is Mg(2+).

It carries out the reaction UMP + diphosphate = 5-phospho-alpha-D-ribose 1-diphosphate + uracil. The protein operates within pyrimidine metabolism; UMP biosynthesis via salvage pathway; UMP from uracil: step 1/1. With respect to regulation, allosterically activated by GTP. Functionally, catalyzes the conversion of uracil and 5-phospho-alpha-D-ribose 1-diphosphate (PRPP) to UMP and diphosphate. This Streptococcus equi subsp. zooepidemicus (strain MGCS10565) protein is Uracil phosphoribosyltransferase.